The sequence spans 162 residues: MAPITVGDVVPDGTISFFDENDQLQTVSVHSIAAGKKVILFGVPGAFTPTCSMSHVPGFIGKAEELKSKGIDEIICFSVNDPFVMKAWGKTYQENKHVKFVADGSGEYTHLLGLELDLKDKGLGIRSRRFALLLDNLKVTVANVENGGEFTVSSAEDILKAL.

The Thioredoxin domain maps to 4-162 (ITVGDVVPDG…SSAEDILKAL (159 aa)). Cys51 serves as the catalytic Cysteine sulfenic acid (-SOH) intermediate.

This sequence belongs to the peroxiredoxin family. Prx5 subfamily. Monomer. In terms of tissue distribution, exclusively expressed in buds and flowers. Also detected in pollen.

The protein localises to the cytoplasm. The catalysed reaction is [glutaredoxin]-dithiol + a hydroperoxide = [glutaredoxin]-disulfide + an alcohol + H2O. Thiol-specific peroxidase that catalyzes the reduction of hydrogen peroxide and organic hydroperoxides to water and alcohols, respectively. Plays a role in cell protection against oxidative stress by detoxifying peroxides. May be involved in intracellular redox signaling. This Arabidopsis thaliana (Mouse-ear cress) protein is Peroxiredoxin-2D (PRXIID).